A 152-amino-acid polypeptide reads, in one-letter code: FAD synthase (152 aa).

ATP-binding positions include 9 to 10, 14 to 17, and D92; these read TF and HPGH.

It belongs to the archaeal FAD synthase family. Homodimer. The cofactor is a divalent metal cation.

The catalysed reaction is FMN + ATP + H(+) = FAD + diphosphate. Its pathway is cofactor biosynthesis; FAD biosynthesis; FAD from FMN: step 1/1. Catalyzes the transfer of the AMP portion of ATP to flavin mononucleotide (FMN) to produce flavin adenine dinucleotide (FAD) coenzyme. The polypeptide is FAD synthase (Ferroglobus placidus (strain DSM 10642 / AEDII12DO)).